A 275-amino-acid polypeptide reads, in one-letter code: Autophagy protein 5 (275 aa).

Methionine 1 is modified (N-acetylmethionine). A Glycyl lysine isopeptide (Lys-Gly) (interchain with G-Cter in ATG12) cross-link involves residue lysine 130.

Belongs to the ATG5 family. As to quaternary structure, forms a conjugate with ATG12. Part of the minor complex composed of 4 sets of ATG12-ATG5 and ATG16L1 (400 kDa); this complex interacts with ATG3 leading to disruption of ATG7 interaction and promotion of ATG8-like proteins lipidation. Forms an 800-kDa complex composed of ATG12-ATG5 and ATG16L2. The ATG12-ATG5 conjugate interacts with RAB33A; this interaction is bridged by ATG16L1 and promotes ATG12-ATG5-ATG16L1 complex recruitment to phagophores. Interacts with TECPR1; the interaction is direct and does not take place when ATG16L1 is associated with the ATG5-ATG12 conjugate. Interacts with DHX58/RIG-1, IFIH1/MDA5 and MAVS/IPS-1 in monomeric form as well as in ATG12-ATG5 conjugate form. The interaction with MAVS is further enhanced upon vesicular stomatitis virus (VSV) infection. Interacts with ATG3. Interacts with ATG7 and ATG10. Interacts with FADD. Interacts with Bassoon/BSN; this interaction is important for the regulation of presynaptic autophagy. Interacts with ATG16L2. In terms of processing, conjugated to ATG12; which is essential for autophagy, but is not required for association with isolation membrane. Post-translationally, acetylated by EP300.

The protein localises to the cytoplasm. Its subcellular location is the preautophagosomal structure membrane. Its function is as follows. Involved in autophagic vesicle formation. Conjugation with ATG12, through a ubiquitin-like conjugating system involving ATG7 as an E1-like activating enzyme and ATG10 as an E2-like conjugating enzyme, is essential for its function. The ATG12-ATG5 conjugate acts as an E3-like enzyme which is required for lipidation of ATG8 family proteins and their association to the vesicle membranes. Involved in mitochondrial quality control after oxidative damage, and in subsequent cellular longevity. Plays a critical role in multiple aspects of lymphocyte development and is essential for both B and T lymphocyte survival and proliferation. Required for optimal processing and presentation of antigens for MHC II. Involved in the maintenance of axon morphology and membrane structures, as well as in normal adipocyte differentiation. Promotes primary ciliogenesis through removal of OFD1 from centriolar satellites and degradation of IFT20 via the autophagic pathway. As part of the ATG8 conjugation system with ATG12 and ATG16L1, required for recruitment of LRRK2 to stressed lysosomes and induction of LRRK2 kinase activity in response to lysosomal stress. In terms of biological role, may play an important role in the apoptotic process, possibly within the modified cytoskeleton. Its expression is a relatively late event in the apoptotic process, occurring downstream of caspase activity. Plays a crucial role in IFN-gamma-induced autophagic cell death by interacting with FADD. In Bos taurus (Bovine), this protein is Autophagy protein 5.